The chain runs to 382 residues: Diphosphomevalonate decarboxylase ERG19 (382 aa).

(R)-5-diphosphomevalonate contacts are provided by residues 22-25 (YWGK), Arg78, 157-162 (SGSACR), and Thr213.

It belongs to the diphosphomevalonate decarboxylase family. Homodimer.

It catalyses the reaction (R)-5-diphosphomevalonate + ATP = isopentenyl diphosphate + ADP + phosphate + CO2. It participates in isoprenoid biosynthesis; isopentenyl diphosphate biosynthesis via mevalonate pathway; isopentenyl diphosphate from (R)-mevalonate: step 3/3. In terms of biological role, diphosphomevalonate decarboxylase; part of the second module of ergosterol biosynthesis pathway that includes the middle steps of the pathway. MVD1 converts diphosphomevalonate into isopentenyl diphosphate. The second module is carried out in the vacuole and involves the formation of farnesyl diphosphate, which is also an important intermediate in the biosynthesis of ubiquinone, dolichol, heme and prenylated proteins. Activity by the mevalonate kinase ERG12 (FG05912) first converts mevalonate into 5-phosphomevalonate. 5-phosphomevalonate is then further converted to 5-diphosphomevalonate by the phosphomevalonate kinase ERG8 (FG09764). The diphosphomevalonate decarboxylase ERG19 (FG10424) then produces isopentenyl diphosphate. The isopentenyl-diphosphate delta-isomerase IDI1 (FG09722) then catalyzes the 1,3-allylic rearrangement of the homoallylic substrate isopentenyl (IPP) to its highly electrophilic allylic isomer, dimethylallyl diphosphate (DMAPP). Finally the farnesyl diphosphate synthase ERG20 (FG06784) catalyzes the sequential condensation of isopentenyl pyrophosphate with dimethylallyl pyrophosphate, and then with the resultant geranylpyrophosphate to the ultimate product farnesyl pyrophosphate. In Gibberella zeae (strain ATCC MYA-4620 / CBS 123657 / FGSC 9075 / NRRL 31084 / PH-1) (Wheat head blight fungus), this protein is Diphosphomevalonate decarboxylase ERG19.